Reading from the N-terminus, the 471-residue chain is Adenosylhomocysteinase (471 aa).

Substrate is bound by residues threonine 60, aspartate 135, and glutamate 196. 197-199 (TTT) contacts NAD(+). Substrate is bound by residues lysine 226 and aspartate 230. Residues asparagine 231, 260-265 (GYGDVG), glutamate 283, asparagine 318, 339-341 (IGH), and asparagine 387 each bind NAD(+).

The protein belongs to the adenosylhomocysteinase family. It depends on NAD(+) as a cofactor.

Its subcellular location is the cytoplasm. The enzyme catalyses S-adenosyl-L-homocysteine + H2O = L-homocysteine + adenosine. The protein operates within amino-acid biosynthesis; L-homocysteine biosynthesis; L-homocysteine from S-adenosyl-L-homocysteine: step 1/1. In terms of biological role, may play a key role in the regulation of the intracellular concentration of adenosylhomocysteine. This is Adenosylhomocysteinase from Chlorobaculum tepidum (strain ATCC 49652 / DSM 12025 / NBRC 103806 / TLS) (Chlorobium tepidum).